A 196-amino-acid chain; its full sequence is Probable GTP-binding protein EngB (196 aa).

The EngB-type G domain occupies 22–195 (NIPEIALVGR…WQWIEERMGK (174 aa)). GTP-binding positions include 30 to 37 (GRSNVGKS), 57 to 61 (GKTQT), 75 to 78 (DVPG), 142 to 145 (TKID), and 174 to 176 (FSA). Serine 37 and threonine 59 together coordinate Mg(2+).

It belongs to the TRAFAC class TrmE-Era-EngA-EngB-Septin-like GTPase superfamily. EngB GTPase family. The cofactor is Mg(2+).

Functionally, necessary for normal cell division and for the maintenance of normal septation. This chain is Probable GTP-binding protein EngB, found in Limosilactobacillus reuteri (strain DSM 20016) (Lactobacillus reuteri).